The primary structure comprises 122 residues: Large ribosomal subunit protein uL14 (122 aa).

This sequence belongs to the universal ribosomal protein uL14 family. In terms of assembly, part of the 50S ribosomal subunit. Forms a cluster with proteins L3 and L19. In the 70S ribosome, L14 and L19 interact and together make contacts with the 16S rRNA in bridges B5 and B8.

Its function is as follows. Binds to 23S rRNA. Forms part of two intersubunit bridges in the 70S ribosome. The sequence is that of Large ribosomal subunit protein uL14 from Vesicomyosocius okutanii subsp. Calyptogena okutanii (strain HA).